Here is a 143-residue protein sequence, read N- to C-terminus: Peptide methionine sulfoxide reductase MsrB (143 aa).

The 124-residue stretch at 16–139 folds into the MsrB domain; the sequence is DAELRRRLTP…NSAALNFESR (124 aa). The Zn(2+) site is built by Cys55, Cys58, Cys104, and Cys107. Residue Cys128 is the Nucleophile of the active site.

Belongs to the MsrB Met sulfoxide reductase family. It depends on Zn(2+) as a cofactor.

The enzyme catalyses L-methionyl-[protein] + [thioredoxin]-disulfide + H2O = L-methionyl-(R)-S-oxide-[protein] + [thioredoxin]-dithiol. The protein is Peptide methionine sulfoxide reductase MsrB of Burkholderia cenocepacia (strain HI2424).